Consider the following 563-residue polypeptide: Beta-catenin-like protein 1 (563 aa).

N-acetylmethionine is present on Met1. Residues 1 to 49 (MDVGELLSYQPNRGTKRPRDDEEEEQKMRRKQTGTRERGRYREEEMTVV) are disordered. Residues 16 to 33 (KRPRDDEEEEQKMRRKQT) carry the Nuclear localization signal motif. Residues 34–45 (GTRERGRYREEE) are compositionally biased toward basic and acidic residues. 2 HEAT repeats span residues 79 to 129 (ESSV…VVAT) and 134 to 176 (YHLL…TLHE). Lys91 carries the N6-acetyllysine modification. The Nuclear export signal (NES) signature appears at 130–140 (MPDLYHLLVEL). ARM repeat units follow at residues 178–228 (EEGA…MAEF), 229–273 (RPEM…LQDN), 274–323 (DENR…CLML), 325–363 (SNRERFLKGEGLQLMNLMLREKKISRSSALKVLDHAMIG), and 364–417 (PEGT…LLRN). Phosphoserine is present on Ser389. A coiled-coil region spans residues 476–540 (DTEEEFYLRR…HIIKEYAENI (65 aa)). Phosphoserine is present on Ser545.

In terms of assembly, component of the PRP19-CDC5L splicing complex composed of a core complex comprising a homotetramer of PRPF19, CDC5L, PLRG1 and BCAS2, and at least three less stably associated proteins CTNNBL1, CWC15 and HSPA8. Interacts directly with CWC15 and CDC5L in the complex. Interacts with AICDA; the interaction is important for the antibody diversification activity of AICDA. Interacts with PRPF31 (via its NLS). Interacts (via its N-terminal NLS) with KPNA1 and KPNA2. Widely expressed with highest levels in skeletal muscle, placenta, heart, spleen, testis and thyroid.

It is found in the nucleus. It localises to the cytoplasm. Its function is as follows. Component of the PRP19-CDC5L complex that forms an integral part of the spliceosome and is required for activating pre-mRNA splicing. Participates in AID/AICDA-mediated somatic hypermutation (SHM) and class-switch recombination (CSR), 2 processes resulting in the production of high-affinity, mutated isotype-switched antibodies. This is Beta-catenin-like protein 1 (CTNNBL1) from Homo sapiens (Human).